The primary structure comprises 541 residues: Chaperonin GroEL (541 aa).

ATP is bound by residues 29–32, 86–90, glycine 413, 477–479, and aspartate 493; these read TLGP, DGTTT, and DAL.

It belongs to the chaperonin (HSP60) family. Forms a cylinder of 14 subunits composed of two heptameric rings stacked back-to-back. Interacts with the co-chaperonin GroES.

The protein localises to the cytoplasm. The catalysed reaction is ATP + H2O + a folded polypeptide = ADP + phosphate + an unfolded polypeptide.. Its function is as follows. Together with its co-chaperonin GroES, plays an essential role in assisting protein folding. The GroEL-GroES system forms a nano-cage that allows encapsulation of the non-native substrate proteins and provides a physical environment optimized to promote and accelerate protein folding. The sequence is that of Chaperonin GroEL from Clostridium botulinum (strain Loch Maree / Type A3).